Here is a 116-residue protein sequence, read N- to C-terminus: Ribosome-binding factor A (116 aa).

Belongs to the RbfA family. In terms of assembly, monomer. Binds 30S ribosomal subunits, but not 50S ribosomal subunits or 70S ribosomes.

The protein resides in the cytoplasm. Its function is as follows. One of several proteins that assist in the late maturation steps of the functional core of the 30S ribosomal subunit. Associates with free 30S ribosomal subunits (but not with 30S subunits that are part of 70S ribosomes or polysomes). Required for efficient processing of 16S rRNA. May interact with the 5'-terminal helix region of 16S rRNA. This chain is Ribosome-binding factor A, found in Streptococcus pneumoniae (strain Hungary19A-6).